We begin with the raw amino-acid sequence, 261 residues long: Type III pantothenate kinase (261 aa).

An ATP-binding site is contributed by Glu-7–Met-14. Gly-108–Arg-111 serves as a coordination point for substrate. Asp-110 acts as the Proton acceptor in catalysis. Asp-130 contributes to the K(+) binding site. Thr-133 serves as a coordination point for ATP. Thr-187 provides a ligand contact to substrate.

This sequence belongs to the type III pantothenate kinase family. Homodimer. It depends on NH4(+) as a cofactor. K(+) is required as a cofactor.

The protein resides in the cytoplasm. The enzyme catalyses (R)-pantothenate + ATP = (R)-4'-phosphopantothenate + ADP + H(+). The protein operates within cofactor biosynthesis; coenzyme A biosynthesis; CoA from (R)-pantothenate: step 1/5. Functionally, catalyzes the phosphorylation of pantothenate (Pan), the first step in CoA biosynthesis. The protein is Type III pantothenate kinase of Caulobacter vibrioides (strain ATCC 19089 / CIP 103742 / CB 15) (Caulobacter crescentus).